A 113-amino-acid chain; its full sequence is U11-theraphotoxin-Hhn1a (113 aa).

The N-terminal stretch at 1-21 (MNTVRVTFLLVFVLAVSLGRA) is a signal peptide. Residues 22–74 (DKEENRMEMQEKTEQGKSYLDFAENLLLQKLEELEAKLLEEDSEESRNSRQKR) constitute a propeptide that is removed on maturation. A disordered region spans residues 61 to 83 (EEDSEESRNSRQKRCIGEGVPCD). 3 cysteine pairs are disulfide-bonded: Cys-75–Cys-90, Cys-82–Cys-95, and Cys-89–Cys-110.

This sequence belongs to the neurotoxin 14 (magi-1) family. 01 (HNTX-16) subfamily. As to expression, expressed by the venom gland.

The protein resides in the secreted. Probable ion channel inhibitor. The polypeptide is U11-theraphotoxin-Hhn1a (Cyriopagopus hainanus (Chinese bird spider)).